The following is a 361-amino-acid chain: UDP-D-xylose:L-fucose alpha-1,3-D-xylosyltransferase 1 (361 aa).

The segment at 1–21 is disordered; sequence MEQKQHILKQSTFSSSPSSYS. The Cytoplasmic segment spans residues 1–34; that stretch reads MEQKQHILKQSTFSSSPSSYSSISDRPISLLSRN. Residues 11–21 show a composition bias toward low complexity; that stretch reads STFSSSPSSYS. A helical; Signal-anchor for type II membrane protein transmembrane segment spans residues 35 to 55; the sequence is GLLLLLLALVLLLGVLLPWPG. The Lumenal portion of the chain corresponds to 56–361; the sequence is SPLFLFPNRL…ALESPLGKLE (306 aa). 2 N-linked (GlcNAc...) asparagine glycosylation sites follow: N92 and N167. The DXD motif motif lies at 190–192; that stretch reads DVD. N222 and N286 each carry an N-linked (GlcNAc...) asparagine glycan.

It belongs to the glycosyltransferase 77 family. Requires Mn(2+) as cofactor. It depends on Mg(2+) as a cofactor. In terms of processing, glycosylated. In terms of tissue distribution, expressed in roots, rosette leaves, cauline leaves and stems.

Its subcellular location is the golgi apparatus membrane. In terms of biological role, catalyzes the transfer of D-xylose from UDP-alpha-D-xylose onto L-fucose. Probably involved in the biosynthesis of rhamnogalacturonan II (RG-II) through xylosylation of the internal fucose moiety of the A-chain of RG-II, a structurally complex pectic polysaccharide of the primary cell wall. RG-II is essential for the cell wall integrity of rapidly growing tissues such as roots and pollen tube growth and elongation. In Arabidopsis thaliana (Mouse-ear cress), this protein is UDP-D-xylose:L-fucose alpha-1,3-D-xylosyltransferase 1.